The chain runs to 404 residues: Serine/threonine transporter SstT (404 aa).

8 consecutive transmembrane segments (helical) span residues 17 to 37 (IGIG…LTGF), 39 to 59 (ILGK…VFAL), 75 to 95 (MTLI…VAVL), 138 to 158 (ALAT…GLAL), 179 to 199 (IVVW…FTTI), 212 to 232 (FLIL…NPLI), 287 to 307 (IPLG…VLTL), and 313 to 333 (FGIP…AVSA).

This sequence belongs to the dicarboxylate/amino acid:cation symporter (DAACS) (TC 2.A.23) family.

It is found in the cell membrane. The catalysed reaction is L-serine(in) + Na(+)(in) = L-serine(out) + Na(+)(out). It catalyses the reaction L-threonine(in) + Na(+)(in) = L-threonine(out) + Na(+)(out). In terms of biological role, involved in the import of serine and threonine into the cell, with the concomitant import of sodium (symport system). The sequence is that of Serine/threonine transporter SstT from Streptococcus pyogenes serotype M12 (strain MGAS2096).